Reading from the N-terminus, the 334-residue chain is Methionine adenosyltransferase 2 subunit beta (334 aa).

Residues 37–40 (TGLL), 60–62 (YSR), 71–72 (NL), cysteine 93, arginine 97, and tyrosine 159 each bind NADP(+). Residues 319-334 (LWPFLVDKRWRQTVFH) form a required for interaction with MAT2A region.

This sequence belongs to the dTDP-4-dehydrorhamnose reductase family. MAT2B subfamily. In terms of assembly, heterotrimer; composed of a catalytic mat2a homodimer that binds one regulatory mat2b chain. Heterohexamer; composed of a central, catalytic mat2a homotetramer flanked on either side by a regulatory mat2b chain. NADP binding increases the affinity for mat2a.

It functions in the pathway amino-acid biosynthesis; S-adenosyl-L-methionine biosynthesis; S-adenosyl-L-methionine from L-methionine: step 1/1. Functionally, regulatory subunit of S-adenosylmethionine synthetase 2, an enzyme that catalyzes the formation of S-adenosylmethionine from methionine and ATP. Regulates MAT2A catalytic activity by changing its kinetic properties, increasing its affinity for L-methionine. Can bind NADP (in vitro). In Xenopus laevis (African clawed frog), this protein is Methionine adenosyltransferase 2 subunit beta (mat2b).